Consider the following 345-residue polypeptide: L-erythro-3,5-diaminohexanoate dehydrogenase (345 aa).

Belongs to the KDD family. As to quaternary structure, homodimer.

It catalyses the reaction (3S,5S)-3,5-diaminohexanoate + NAD(+) + H2O = (5S)-5-amino-3-oxohexanoate + NH4(+) + NADH + H(+). Its pathway is amino-acid degradation; L-lysine degradation via acetate pathway. Involved in the anaerobic fermentation of lysine. Catalyzes the oxidative deamination of L-erythro-3,5-diaminohexanoate (3,5-DAH) to 3-keto-5-aminohexanoate (KAH). It can use NAD or NADP. This chain is L-erythro-3,5-diaminohexanoate dehydrogenase, found in Fusobacterium nucleatum subsp. nucleatum (strain ATCC 25586 / DSM 15643 / BCRC 10681 / CIP 101130 / JCM 8532 / KCTC 2640 / LMG 13131 / VPI 4355).